Consider the following 91-residue polypeptide: Probable Fe(2+)-trafficking protein (91 aa).

This sequence belongs to the Fe(2+)-trafficking protein family.

Its function is as follows. Could be a mediator in iron transactions between iron acquisition and iron-requiring processes, such as synthesis and/or repair of Fe-S clusters in biosynthetic enzymes. In Burkholderia mallei (strain NCTC 10247), this protein is Probable Fe(2+)-trafficking protein.